Here is a 174-residue protein sequence, read N- to C-terminus: Myeloid-derived growth factor (174 aa).

The signal sequence occupies residues 1 to 32 (MAAPSGRRNGSGGANLWVSLLLAAAALRPVET).

Belongs to the MYDGF family.

The protein resides in the secreted. It localises to the endoplasmic reticulum-Golgi intermediate compartment. Its subcellular location is the endoplasmic reticulum. The protein localises to the golgi apparatus. Functionally, bone marrow-derived monocyte and paracrine-acting protein that promotes cardiac myocyte survival and adaptive angiogenesis for cardiac protection and/or repair after myocardial infarction (MI). Stimulates endothelial cell proliferation through a MAPK1/3-, STAT3- and CCND1-mediated signaling pathway. Inhibits cardiac myocyte apoptosis in a PI3K/AKT-dependent signaling pathway. This Bos taurus (Bovine) protein is Myeloid-derived growth factor.